The following is a 323-amino-acid chain: Rhazimal reductase 2 (323 aa).

Asp-53 serves as a coordination point for NADP(+). The active-site Proton donor is the Tyr-58. Residues 167 to 168 (SN), Gln-189, 215 to 220 (WSPLLS), and 289 to 297 (DQIQQIPQR) contribute to the NADP(+) site.

Belongs to the aldo/keto reductase family. Monomer.

The catalysed reaction is rhazimol + NADP(+) = rhazimal + NADPH + 2 H(+). Its pathway is alkaloid biosynthesis. Functionally, oxidoreductase involved in the biosynthesis of akuammilan monoterpene indole alkaloids (MIAs) natural products, components with various biological properties such as antidiabetic, antibacterial, anti-inflammatory, anticancer, and antimalarial activities. Catalyzes the conversion of rhazimal to rhazimol. This Alstonia scholaris (Dogbane) protein is Rhazimal reductase 2.